A 461-amino-acid polypeptide reads, in one-letter code: Glutamyl-tRNA reductase (461 aa).

Substrate is bound by residues 50–53 (TCNR), serine 111, 116–118 (EPQ), and glutamine 122. Cysteine 51 acts as the Nucleophile in catalysis. 191 to 196 (GAGEMA) serves as a coordination point for NADP(+).

Belongs to the glutamyl-tRNA reductase family. As to quaternary structure, homodimer.

It carries out the reaction (S)-4-amino-5-oxopentanoate + tRNA(Glu) + NADP(+) = L-glutamyl-tRNA(Glu) + NADPH + H(+). The protein operates within porphyrin-containing compound metabolism; protoporphyrin-IX biosynthesis; 5-aminolevulinate from L-glutamyl-tRNA(Glu): step 1/2. Its function is as follows. Catalyzes the NADPH-dependent reduction of glutamyl-tRNA(Glu) to glutamate 1-semialdehyde (GSA). The polypeptide is Glutamyl-tRNA reductase (Syntrophobacter fumaroxidans (strain DSM 10017 / MPOB)).